The sequence spans 100 residues: Large ribosomal subunit protein bL21 (100 aa).

It belongs to the bacterial ribosomal protein bL21 family. As to quaternary structure, part of the 50S ribosomal subunit. Contacts protein L20.

This protein binds to 23S rRNA in the presence of protein L20. This Paramagnetospirillum magneticum (strain ATCC 700264 / AMB-1) (Magnetospirillum magneticum) protein is Large ribosomal subunit protein bL21.